A 702-amino-acid chain; its full sequence is Kinesin-like protein KIF3A (702 aa).

The region spanning N14 to I345 is the Kinesin motor domain. ATP is bound at residue G100–T107. Residues P355–L593 adopt a coiled-coil conformation. Disordered stretches follow at residues K372–E424 and L667–Q702. The span at E376–E400 shows a compositional bias: acidic residues. The span at D410 to E424 shows a compositional bias: basic and acidic residues. The globular stretch occupies residues P600–Q702. The span at T675 to S690 shows a compositional bias: basic residues. Residue S690 is modified to Phosphoserine.

The protein belongs to the TRAFAC class myosin-kinesin ATPase superfamily. Kinesin family. Kinesin II subfamily. As to quaternary structure, heterodimer of KIF3A and KIF3B. Interacts with CIMAP3. Interacts with CLN3. Interacts with DCTN1. Interacts with FLCN. Interacts with AP3B1.

The protein resides in the cytoplasm. Its subcellular location is the cytoskeleton. It is found in the cell projection. The protein localises to the cilium. It localises to the microtubule organizing center. The protein resides in the centrosome. Its subcellular location is the centriole. Microtubule-based anterograde translocator for membranous organelles. Plus end-directed microtubule sliding activity in vitro. Plays a role in primary cilia formation. Plays a role in centriole cohesion and subdistal appendage organization and function. Regulates the formation of the subdistal appendage via recruitment of DCTN1 to the centriole. Also required for ciliary basal feet formation and microtubule anchoring to mother centriole. This chain is Kinesin-like protein KIF3A (KIF3A), found in Pongo abelii (Sumatran orangutan).